Here is a 90-residue protein sequence, read N- to C-terminus: Inner kinetochore subunit MHF1 (90 aa).

Belongs to the TAF9 family. CENP-S/MHF1 subfamily. In terms of assembly, the MHF histone-fold complex is a heterotetramer of 2 MHF1-MHF2 heterodimers. Together with MPH1/FANCM, forms the FANCM-MHF complex. Component of the inner kinetochore constitutive centromere-associated network (CCAN) (also known as central kinetochore CTF19 complex in yeast), which is composed of at least AME1, CHL4, CNN1, CTF3, CTF19, IML3, MCM16, MCM21, MCM22, MHF1, MHF2, MIF2, NKP1, NKP2, OKP1 and WIP1.

Functionally, dsDNA-binding component of a FANCM-MHF complex involved in DNA damage repair and genome maintenance. FANCM-MHF promotes gene conversion at blocked replication forks, probably by reversal of the stalled fork. Component of the kinetochore, a multiprotein complex that assembles on centromeric DNA and attaches chromosomes to spindle microtubules, mediating chromosome segregation and sister chromatid segregation during meiosis and mitosis. Component of the inner kinetochore constitutive centromere-associated network (CCAN), which serves as a structural platform for outer kinetochore assembly. The polypeptide is Inner kinetochore subunit MHF1 (Saccharomyces cerevisiae (strain ATCC 204508 / S288c) (Baker's yeast)).